Reading from the N-terminus, the 197-residue chain is Large ribosomal subunit protein eL15 (197 aa).

The segment at 175–197 is disordered; sequence LRTGRKGSSKSRPSIRANGRLRR.

This sequence belongs to the eukaryotic ribosomal protein eL15 family.

The polypeptide is Large ribosomal subunit protein eL15 (rpl15e) (Thermoplasma volcanium (strain ATCC 51530 / DSM 4299 / JCM 9571 / NBRC 15438 / GSS1)).